The following is a 324-amino-acid chain: Glyoxylate/hydroxypyruvate reductase B (324 aa).

Residues Arg237 and Glu266 contribute to the active site. His285 acts as the Proton donor in catalysis.

It belongs to the D-isomer specific 2-hydroxyacid dehydrogenase family. GhrB subfamily. In terms of assembly, homodimer.

The protein resides in the cytoplasm. It catalyses the reaction glycolate + NADP(+) = glyoxylate + NADPH + H(+). The catalysed reaction is (R)-glycerate + NAD(+) = 3-hydroxypyruvate + NADH + H(+). It carries out the reaction (R)-glycerate + NADP(+) = 3-hydroxypyruvate + NADPH + H(+). In terms of biological role, catalyzes the NADPH-dependent reduction of glyoxylate and hydroxypyruvate into glycolate and glycerate, respectively. The sequence is that of Glyoxylate/hydroxypyruvate reductase B from Escherichia coli O6:H1 (strain CFT073 / ATCC 700928 / UPEC).